A 705-amino-acid chain; its full sequence is Effector protein AvrPphDPsv (705 aa).

Positions 1-15 are enriched in polar residues; the sequence is MNPLQSIQHNITTPP. 2 disordered regions span residues 1 to 40 and 175 to 205; these read MNPL…ISPS and RLET…RRES.

The protein resides in the secreted. Functionally, effector protein involved in non-host recognition. This is Effector protein AvrPphDPsv (avrPphDPsv) from Pseudomonas savastanoi (Pseudomonas syringae pv. savastanoi).